The following is a 72-amino-acid chain: 3-deoxy-manno-octulosonate cytidylyltransferase (72 aa).

The protein belongs to the KdsB family. In terms of assembly, homodimer.

Its subcellular location is the cytoplasm. The enzyme catalyses 3-deoxy-alpha-D-manno-oct-2-ulosonate + CTP = CMP-3-deoxy-beta-D-manno-octulosonate + diphosphate. The protein operates within nucleotide-sugar biosynthesis; CMP-3-deoxy-D-manno-octulosonate biosynthesis; CMP-3-deoxy-D-manno-octulosonate from 3-deoxy-D-manno-octulosonate and CTP: step 1/1. It functions in the pathway bacterial outer membrane biogenesis; lipopolysaccharide biosynthesis. In terms of biological role, activates KDO (a required 8-carbon sugar) for incorporation into bacterial lipopolysaccharide in Gram-negative bacteria. The polypeptide is 3-deoxy-manno-octulosonate cytidylyltransferase (kpsU) (Escherichia coli).